We begin with the raw amino-acid sequence, 201 residues long: Lipopolysaccharide core heptose(II)-phosphate phosphatase (201 aa).

The first 35 residues, 1–35 (MLAFTLRFIKNKRYFAILAGALVIIAGLTSQHAWS), serve as a signal peptide directing secretion.

The protein belongs to the phosphoglycerate mutase family. Ais subfamily.

It is found in the periplasm. Its pathway is bacterial outer membrane biogenesis; lipopolysaccharide metabolism. Its function is as follows. Catalyzes the dephosphorylation of heptose(II) of the outer membrane lipopolysaccharide core. In Salmonella enteritidis PT4 (strain P125109), this protein is Lipopolysaccharide core heptose(II)-phosphate phosphatase.